The following is a 624-amino-acid chain: MGDPLLPGSTGLGSGSATAATGGSVTAGSGLGNGGTGGAERPPSPARLTHTSEKHPKVTLTELNMLRRHRELCDVVLNVGGRKIFAHRVILSACSSYFCAMFTGELEESRQTEVTIRDIDENAMELLIDFCYTAHIIVEESNVQTLLPAACLLQLVEIQDICCEFLKRQLDPTNCLGIRAFADTHSCRELLRIADKFTQHNFQEVMESEEFLLLPVGQLVDIICSDELNVRSEEQVFNAVMSWLKYNVADRRQHLAQVLQHVRLPLLSPKFLVGTVGSDLLVRSDEACRDLVDEAKNYLLLPQERPLMQGPRTRPRKPTRRGEVLFAVGGWCSGDAIASVERFDPQTNDWKMVAPMSKRRCGVGVAVLNDLLYAVGGHDGQSYLNSIERYDPQTNQWSCDVAPTTSCRTSVGVAVLDGFLYAVGGQDGVQCLNHVERYDPKENKWSKVAPMTTRRLGVAVAVLSGHLYAIGGSDGQCPLNTVERYDPRQNKWVAVNPMSTRRKHLGCAVFNNYIYAVGGRDDCMELSSAERYNPLTNTWSPIVAMTSRRSGVGLAVVNGQLYAVGGFDGSAYLKTIEVYDPETNQWRLCGCMNYRRLGGGVGVMRAPQTENYMWCDNSFRQHNL.

Positions 1 to 55 are disordered; the sequence is MGDPLLPGSTGLGSGSATAATGGSVTAGSGLGNGGTGGAERPPSPARLTHTSEKH. Over residues 15–28 the composition is skewed to low complexity; that stretch reads GSATAATGGSVTAG. Positions 29–38 are enriched in gly residues; the sequence is SGLGNGGTGG. Residues 73 to 140 form the BTB domain; sequence CDVVLNVGGR…CYTAHIIVEE (68 aa). In terms of domain architecture, BACK spans 175–277; sequence CLGIRAFADT…SPKFLVGTVG (103 aa). Kelch repeat units follow at residues 324 to 370, 372 to 418, 419 to 465, 467 to 512, 514 to 559, and 560 to 606; these read VLFA…VLND, LYAV…VLDG, FLYA…VLSG, LYAI…VFNN, IYAV…VVNG, and QLYA…VMRA.

It functions in the pathway protein modification; protein ubiquitination. Its function is as follows. Probable substrate-specific adapter of an E3 ubiquitin-protein ligase complex which mediates the ubiquitination and subsequent proteasomal degradation of target proteins. May have a role in synapse differentiation and growth. The protein is Kelch-like protein diablo of Drosophila grimshawi (Hawaiian fruit fly).